Consider the following 236-residue polypeptide: Dual specificity protein phosphatase 15 (236 aa).

Glycine 2 carries N-myristoyl glycine lipidation. Positions 4–144 constitute a Tyrosine-protein phosphatase domain; the sequence is GMTKVLPGLY…LEEFGWANSQ (141 aa). The active-site Phosphocysteine intermediate is the cysteine 88. The disordered stretch occupies residues 178–213; the sequence is GPGTSAPSATTASSAASEGTLQRLVPRSPRESHRPL. The segment covering 181 to 194 has biased composition (low complexity); sequence TSAPSATTASSAAS.

Belongs to the protein-tyrosine phosphatase family. Non-receptor class dual specificity subfamily.

The protein localises to the cell membrane. The enzyme catalyses O-phospho-L-tyrosyl-[protein] + H2O = L-tyrosyl-[protein] + phosphate. It catalyses the reaction O-phospho-L-seryl-[protein] + H2O = L-seryl-[protein] + phosphate. It carries out the reaction O-phospho-L-threonyl-[protein] + H2O = L-threonyl-[protein] + phosphate. Its function is as follows. May play a role in the regulation of oligodendrocyte differentiation. May play a role in the regulation of myelin formation. Involved in the regulation of Erk1/2 phosphorylation in Schwann cells; the signaling may be linked to the regulation of myelination. May dephosphorylate MAPK13, ATF2, ERBB3, PDGFRB and SNX6. In Rattus norvegicus (Rat), this protein is Dual specificity protein phosphatase 15 (Dusp15).